Here is a 248-residue protein sequence, read N- to C-terminus: Adenosylcobinamide-GDP ribazoletransferase (248 aa).

5 consecutive transmembrane segments (helical) span residues 30–50 (LAES…CYAL), 54–74 (VLSG…LTAV), 112–132 (FGAL…DAVI), 134–154 (AGSF…MVLA), and 188–208 (AVSA…LAAG).

It belongs to the CobS family. It depends on Mg(2+) as a cofactor.

It is found in the cell inner membrane. The enzyme catalyses alpha-ribazole + adenosylcob(III)inamide-GDP = adenosylcob(III)alamin + GMP + H(+). It catalyses the reaction alpha-ribazole 5'-phosphate + adenosylcob(III)inamide-GDP = adenosylcob(III)alamin 5'-phosphate + GMP + H(+). It functions in the pathway cofactor biosynthesis; adenosylcobalamin biosynthesis; adenosylcobalamin from cob(II)yrinate a,c-diamide: step 7/7. Functionally, joins adenosylcobinamide-GDP and alpha-ribazole to generate adenosylcobalamin (Ado-cobalamin). Also synthesizes adenosylcobalamin 5'-phosphate from adenosylcobinamide-GDP and alpha-ribazole 5'-phosphate. The sequence is that of Adenosylcobinamide-GDP ribazoletransferase from Syntrophobacter fumaroxidans (strain DSM 10017 / MPOB).